Reading from the N-terminus, the 138-residue chain is Large ribosomal subunit protein uL16 (138 aa).

The span at 1–19 shows a compositional bias: basic residues; the sequence is MLSPKRTKYRKAHKGRIHG. Positions 1–21 are disordered; it reads MLSPKRTKYRKAHKGRIHGNA.

It belongs to the universal ribosomal protein uL16 family. As to quaternary structure, part of the 50S ribosomal subunit.

Binds 23S rRNA and is also seen to make contacts with the A and possibly P site tRNAs. The sequence is that of Large ribosomal subunit protein uL16 from Granulibacter bethesdensis (strain ATCC BAA-1260 / CGDNIH1).